We begin with the raw amino-acid sequence, 245 residues long: Glucan endo-1,3-beta-glucosidase (245 aa).

Residues 1-23 form the signal peptide; the sequence is MMKTLVVVLSLSLTILSFGGAHA. 8 disulfide bridges follow: Cys-32–Cys-244, Cys-80–Cys-90, Cys-95–Cys-102, Cys-150–Cys-233, Cys-155–Cys-216, Cys-163–Cys-179, Cys-183–Cys-192, and Cys-193–Cys-203.

The protein belongs to the thaumatin family. In terms of tissue distribution, abundantly expressed in ripening fruit.

It localises to the secreted. The catalysed reaction is Hydrolysis of (1-&gt;3)-beta-D-glucosidic linkages in (1-&gt;3)-beta-D-glucans.. The chain is Glucan endo-1,3-beta-glucosidase from Prunus avium (Cherry).